The sequence spans 143 residues: Putative pre-16S rRNA nuclease (143 aa).

Belongs to the YqgF nuclease family.

The protein resides in the cytoplasm. Could be a nuclease involved in processing of the 5'-end of pre-16S rRNA. This Crocosphaera subtropica (strain ATCC 51142 / BH68) (Cyanothece sp. (strain ATCC 51142)) protein is Putative pre-16S rRNA nuclease.